Consider the following 231-residue polypeptide: Aquaporin Z (231 aa).

2 consecutive transmembrane segments (helical) span residues 9-29 (CFGT…AAGF) and 34-54 (IGFA…AFAV). The NPA 1 signature appears at 63–65 (NPA). The next 3 helical transmembrane spans lie at 82 to 102 (VGYV…LYLI), 129 to 149 (YSML…LLVI), and 156 to 176 (FAPA…IHLI). Residues 186 to 188 (NPA) carry the NPA 2 motif. A helical transmembrane segment spans residues 202–222 (LEQLWFFWVVPIVGGIIGGLI).

Belongs to the MIP/aquaporin (TC 1.A.8) family. Homotetramer.

The protein localises to the cell inner membrane. It catalyses the reaction H2O(in) = H2O(out). Functionally, channel that permits osmotically driven movement of water in both directions. It is involved in the osmoregulation and in the maintenance of cell turgor during volume expansion in rapidly growing cells. It mediates rapid entry or exit of water in response to abrupt changes in osmolarity. The chain is Aquaporin Z from Escherichia coli O6:H1 (strain CFT073 / ATCC 700928 / UPEC).